We begin with the raw amino-acid sequence, 109 residues long: C-X-C motif chemokine 13 (109 aa).

The signal sequence occupies residues 1-21 (MRLSTATLLLLLASCLSPGHG). 2 disulfides stabilise this stretch: Cys32/Cys59 and Cys34/Cys75.

It belongs to the intercrine alpha (chemokine CxC) family. In terms of tissue distribution, found in spleen (B-cell-rich zone or follicles), Peyer patches (strongest within germinal centers and extending to the mantle zone) and lymph nodes (in reticular pattern in follicles).

The protein localises to the secreted. In terms of biological role, strongly chemotactic for B-lymphocytes, weakly for spleen monocytes and macrophages but no chemotactic activity for granulocytes. Binds to BLR1/CXCR5. May play a role in directing the migration of B-lymphocytes to follicles in secondary lymphoid organs. The chain is C-X-C motif chemokine 13 (Cxcl13) from Mus musculus (Mouse).